Consider the following 620-residue polypeptide: 1-deoxy-D-xylulose-5-phosphate synthase (620 aa).

Residues H80 and 121–123 (GHS) contribute to the thiamine diphosphate site. D152 contributes to the Mg(2+) binding site. Residues 153-154 (GA), N181, Y288, and E370 each bind thiamine diphosphate. N181 serves as a coordination point for Mg(2+).

Belongs to the transketolase family. DXPS subfamily. In terms of assembly, homodimer. The cofactor is Mg(2+). Thiamine diphosphate serves as cofactor.

It carries out the reaction D-glyceraldehyde 3-phosphate + pyruvate + H(+) = 1-deoxy-D-xylulose 5-phosphate + CO2. It participates in metabolic intermediate biosynthesis; 1-deoxy-D-xylulose 5-phosphate biosynthesis; 1-deoxy-D-xylulose 5-phosphate from D-glyceraldehyde 3-phosphate and pyruvate: step 1/1. Its function is as follows. Catalyzes the acyloin condensation reaction between C atoms 2 and 3 of pyruvate and glyceraldehyde 3-phosphate to yield 1-deoxy-D-xylulose-5-phosphate (DXP). The chain is 1-deoxy-D-xylulose-5-phosphate synthase from Escherichia coli O7:K1 (strain IAI39 / ExPEC).